Reading from the N-terminus, the 545-residue chain is CTP synthase (545 aa).

The tract at residues 1 to 266 is amidoligase domain; that stretch reads MTKNYIFITG…DDYICNYFKL (266 aa). Ser-14 contacts CTP. Ser-14 contributes to the UTP binding site. Residues 15–20 and Asp-72 contribute to the ATP site; that span reads SLGKGI. Mg(2+) contacts are provided by Asp-72 and Glu-140. CTP contacts are provided by residues 147–149, 187–192, and Lys-223; these read DIE and KTKPTQ. UTP contacts are provided by residues 187-192 and Lys-223; that span reads KTKPTQ. 239 to 241 provides a ligand contact to ATP; the sequence is KDV. One can recognise a Glutamine amidotransferase type-1 domain in the interval 291 to 543; the sequence is VIGIIGKYIK…IKSAGKHKKN (253 aa). L-glutamine is bound at residue Gly-352. Cys-379 acts as the Nucleophile; for glutamine hydrolysis in catalysis. Residues 380–383, Glu-403, and Arg-471 each bind L-glutamine; that span reads LGMQ. Active-site residues include His-516 and Glu-518.

It belongs to the CTP synthase family. As to quaternary structure, homotetramer.

The enzyme catalyses UTP + L-glutamine + ATP + H2O = CTP + L-glutamate + ADP + phosphate + 2 H(+). It catalyses the reaction L-glutamine + H2O = L-glutamate + NH4(+). The catalysed reaction is UTP + NH4(+) + ATP = CTP + ADP + phosphate + 2 H(+). It functions in the pathway pyrimidine metabolism; CTP biosynthesis via de novo pathway; CTP from UDP: step 2/2. Its activity is regulated as follows. Allosterically activated by GTP, when glutamine is the substrate; GTP has no effect on the reaction when ammonia is the substrate. The allosteric effector GTP functions by stabilizing the protein conformation that binds the tetrahedral intermediate(s) formed during glutamine hydrolysis. Inhibited by the product CTP, via allosteric rather than competitive inhibition. Catalyzes the ATP-dependent amination of UTP to CTP with either L-glutamine or ammonia as the source of nitrogen. Regulates intracellular CTP levels through interactions with the four ribonucleotide triphosphates. This chain is CTP synthase, found in Buchnera aphidicola subsp. Acyrthosiphon pisum (strain Tuc7).